The sequence spans 323 residues: MNKILFYLFVYAVVKSAAYDPLKAPNYFEEFVHRFNKNYSSEVEKLRRFKIFQHNLNEIINKNQNDSAKYEINKFSDLSKDETIAKYTGLSLPTQTQNFCKVILLDQPPGKGPLEFDWRRLNKVTSVKNQGMCGACWAFATLGSLESQFAIKHNELINLSEQQMIDCDFVDAGCNGGLLHTAFEAIIKMGGVQLESDYPYEADNNNCRMNSNKFLVQVKDCYRYIIVYEEKLKDLLPLVGPIPMAIDAADIVNYKQGIIKYCFDSGLNHAVLLVGYGVENNIPYWTFKNTWGTDWGEDGFFRVQQNINACGMRNELASTAVIY.

Residues 1–16 (MNKILFYLFVYAVVKS) form the signal peptide. A propeptide spans 17–112 (AAYDPLKAPN…ILLDQPPGKG (96 aa)) (activation peptide). Cystine bridges form between C133/C174, C167/C207, and C262/C310. C136 is a catalytic residue. N-linked (GlcNAc...) asparagine; by host glycosylation occurs at N158. Residues H269 and N289 contribute to the active site.

It belongs to the peptidase C1 family. Post-translationally, synthesized as an inactive proenzyme and activated by proteolytic removal of the inhibitory propeptide.

The catalysed reaction is Endopeptidase of broad specificity, hydrolyzing substrates of both cathepsin L and cathepsin B.. In terms of biological role, cysteine protease that plays an essential role in host liquefaction to facilitate horizontal transmission of the virus. May participate in the degradation of foreign protein expressed by the baculovirus system. This chain is Viral cathepsin (VCATH), found in Bombyx mori (Silk moth).